We begin with the raw amino-acid sequence, 115 residues long: Ribonuclease P protein component (115 aa).

It belongs to the RnpA family. In terms of assembly, consists of a catalytic RNA component (M1 or rnpB) and a protein subunit.

It catalyses the reaction Endonucleolytic cleavage of RNA, removing 5'-extranucleotides from tRNA precursor.. Its function is as follows. RNaseP catalyzes the removal of the 5'-leader sequence from pre-tRNA to produce the mature 5'-terminus. It can also cleave other RNA substrates such as 4.5S RNA. The protein component plays an auxiliary but essential role in vivo by binding to the 5'-leader sequence and broadening the substrate specificity of the ribozyme. The sequence is that of Ribonuclease P protein component from Phytoplasma australiense.